Reading from the N-terminus, the 328-residue chain is Sterol-4-alpha-carboxylate 3-dehydrogenase, decarboxylating (328 aa).

Tyr-145 serves as the catalytic Proton acceptor. Lys-149 is a binding site for NAD(+). A helical transmembrane segment spans residues 259-279 (LHMVLPTPIALSLVWIMALIW).

Belongs to the 3-beta-HSD family. In terms of assembly, homodimer.

It localises to the endoplasmic reticulum membrane. Its subcellular location is the lipid droplet. It carries out the reaction a 3beta-hydroxysteroid-4alpha-carboxylate + NADP(+) = a 3-oxosteroid + CO2 + NADPH. The enzyme catalyses a 3beta-hydroxysteroid-4alpha-carboxylate + NAD(+) = a 3-oxosteroid + CO2 + NADH. Its pathway is steroid biosynthesis; zymosterol biosynthesis; zymosterol from lanosterol: step 4/6. In terms of biological role, catalyzes the NAD(P)(+)-dependent oxidative decarboxylation of the C4 methyl groups of 4-alpha-carboxysterols in post-squalene cholesterol biosynthesis. This chain is Sterol-4-alpha-carboxylate 3-dehydrogenase, decarboxylating (nsdhl), found in Dictyostelium discoideum (Social amoeba).